A 688-amino-acid polypeptide reads, in one-letter code: Elongation factor G (688 aa).

Residues 8–282 (INFRNFGIMA…AVVDFLPSPV (275 aa)) form the tr-type G domain. Residues 17-24 (AHIDAGKT), 81-85 (DTPGH), and 135-138 (NKMD) each bind GTP.

The protein belongs to the TRAFAC class translation factor GTPase superfamily. Classic translation factor GTPase family. EF-G/EF-2 subfamily.

It localises to the cytoplasm. Its function is as follows. Catalyzes the GTP-dependent ribosomal translocation step during translation elongation. During this step, the ribosome changes from the pre-translocational (PRE) to the post-translocational (POST) state as the newly formed A-site-bound peptidyl-tRNA and P-site-bound deacylated tRNA move to the P and E sites, respectively. Catalyzes the coordinated movement of the two tRNA molecules, the mRNA and conformational changes in the ribosome. This Mycoplasma pneumoniae (strain ATCC 29342 / M129 / Subtype 1) (Mycoplasmoides pneumoniae) protein is Elongation factor G (fusA).